A 558-amino-acid polypeptide reads, in one-letter code: MFMVRLKFASISHNFSTVAAKHRRVPSKYKSLAIGKAQQAITDYLHTTRSLSYTHAEQIASNASVSIRNLILKLDFSVPTFSKSLRKHLSYHPINEFEFFFESIGIDYSEVSEFLPEKKFFFSEDRTVLDAAFALSGFGFPWNKLGKLYKEERLVFVQRPGEIESRLLKFKDIGFSTVAVIGTCLAIPRTLCGGGELGSEIRCLFVKLKRLFDEFDSHHLFEENVDSWLAVSRKIRIFYDLGCENEEMWELMCRNKSLFLEYSEEALMNKAGYFCRFGVSKEDAALLILRNPAIMNFDLEKPVISVTGMLKHFGLRQDEVDAVAQKYPYVFGRNQLKNLPYVLRAIDLHERIFDILKNGNHHLLASYTLMDPDEDLEREYQEGLEELQNSRTKRHNIQKLDFLHEIGFGENGITMKVLQHVHGTAVELHDRFQILLNSGIIFSKICMLIRSAPKILNQKPHSIQDKLRFLCGEMGDSLDYLEVFPAYLCFDLENRISPRFRFHKWLVEKGFSEKSYSIASIVATSEKAFIARLYGIHPAIPKHWFERFSSRKTRDTVS.

Residues 1 to 58 (MFMVRLKFASISHNFSTVAAKHRRVPSKYKSLAIGKAQQAITDYLHTTRSLSYTHAEQ) constitute a mitochondrion transit peptide.

This sequence belongs to the mTERF family.

It is found in the mitochondrion. Functionally, transcription termination factor involved in the regulation of mitochondrial-encoded gene expression. Essential for normal plant growth and development. This chain is Transcription termination factor MTEF18, mitochondrial, found in Arabidopsis thaliana (Mouse-ear cress).